The sequence spans 217 residues: Thymidylate kinase (217 aa).

Position 14–21 (14–21) interacts with ATP; sequence GNEGSGKT.

This sequence belongs to the thymidylate kinase family.

The catalysed reaction is dTMP + ATP = dTDP + ADP. Functionally, phosphorylation of dTMP to form dTDP in both de novo and salvage pathways of dTTP synthesis. The sequence is that of Thymidylate kinase from Orientia tsutsugamushi (strain Ikeda) (Rickettsia tsutsugamushi).